The sequence spans 302 residues: Protein translocase subunit SecF (302 aa).

6 consecutive transmembrane segments (helical) span residues 12–32 (FFIY…FVKG), 138–158 (YAWY…TIRF), 166–186 (AILA…LFGI), 190–210 (LTAI…TIVV), 249–269 (FLVV…FAFG), and 272–292 (VGVI…VIGM).

The protein belongs to the SecD/SecF family. SecF subfamily. In terms of assembly, forms a complex with SecD. Part of the essential Sec protein translocation apparatus which comprises SecA, SecYEG and auxiliary proteins SecDF. Other proteins may also be involved.

It is found in the cell inner membrane. Its function is as follows. Part of the Sec protein translocase complex. Interacts with the SecYEG preprotein conducting channel. SecDF uses the proton motive force (PMF) to complete protein translocation after the ATP-dependent function of SecA. This Petrotoga mobilis (strain DSM 10674 / SJ95) protein is Protein translocase subunit SecF.